The chain runs to 149 residues: MKCPFCSHQETQVVETRVSEDGDFIRRRRQCGACDKRFTTYERPEVNFPTVVKKDGRRVEYDREKLLGSFKLALRKRPVSTVQIDSAIERIEEKLLNLGQREILSSRIGELVMRELKKLDKVAYVRYASVYRSFEDIDEFRALVDEVRK.

The segment at C3–C34 is a zinc-finger region. Positions P49–E139 constitute an ATP-cone domain.

This sequence belongs to the NrdR family. The cofactor is Zn(2+).

In terms of biological role, negatively regulates transcription of bacterial ribonucleotide reductase nrd genes and operons by binding to NrdR-boxes. This Acidovorax sp. (strain JS42) protein is Transcriptional repressor NrdR.